The following is a 503-amino-acid chain: Surface lipoprotein assembly modifier (503 aa).

The N-terminal stretch at 1–34 is a signal peptide; it reads MTITPVYTTFTPTKTPIKFFMAGLTFLIAHISHA. The N-terminal domain stretch occupies residues 38–220; the sequence is RTDNQEPINQ…QYRQALKQRD (183 aa). Residues 136 to 169 form a TPR repeat; that stretch reads ILLGYANALAALDKGNAKKAIDELRRIIAIMPEY. The C-terminal probable beta barrel stretch occupies residues 221–503; that stretch reads SWTWQVGMNL…QMFVEFSRIF (283 aa). The next 14 membrane-spanning stretches (beta stranded) occupy residues 222 to 232, 259 to 270, 275 to 285, 299 to 308, 313 to 322, 334 to 343, 348 to 358, 372 to 382, 387 to 396, 410 to 419, 424 to 434, 454 to 463, 470 to 479, and 493 to 503; these read WTWQVGMNLAK, LSYQLGADKKWS, AYVGANAQIYG, GRLGANLGFA, DLSIETYGEK, IGIRMSVDYR, FQSLNAIDISR, TLYSTSLIYYP, YYLLGADFYD, RGIRTAWGQE, LSSRAQISINK, MQASLSLWHR, ITPRLTISTN, and NQMFVEFSRIF.

Belongs to the Slam family.

It is found in the cell outer membrane. Its function is as follows. Required for correct export to the cell surface of some cell outer membrane lipoproteins (tested with TpbP) upon heterologous expression in E.coli and probably also in Moraxella. This chain is Surface lipoprotein assembly modifier, found in Moraxella catarrhalis (Branhamella catarrhalis).